The chain runs to 327 residues: Cyclic AMP-responsive element-binding protein 1 (327 aa).

Disordered stretches follow at residues 1 to 26 (MTME…QQMT) and 94 to 113 (SEDS…RREI). One can recognise a KID domain in the interval 87-146 (QISTIAESEDSQESVDSVTDSQKRREILSRRPSYRKILNDLSSDAPGVPRIEEEKSEEET). S119 carries the post-translational modification Phosphoserine; by CaMK1, CaMK2, CaMK4, PKB/AKT1 or PKB/AKT2, RPS6KA3, RPS6KA4, RPS6KA5, SGK1 and TSSK4. K122 is covalently cross-linked (Glycyl lysine isopeptide (Lys-Gly) (interchain with G-Cter in SUMO2)). The interval 125–148 (NDLSSDAPGVPRIEEEKSEEETSA) is disordered. S128 bears the Phosphoserine mark. The residue at position 257 (S257) is a Phosphoserine; by HIPK2. The bZIP domain maps to 269–327 (ARKREVRLMKNREAARECRRKKKEYVKCLENRVAVLENQNKTLIEELKALKDLYCHKSD). Residues 270–295 (RKREVRLMKNREAARECRRKKKEYVK) are basic motif. Glycyl lysine isopeptide (Lys-Gly) (interchain with G-Cter in SUMO1) cross-links involve residues K271 and K290. A leucine-zipper region spans residues 297 to 318 (LENRVAVLENQNKTLIEELKAL).

The protein belongs to the bZIP family. As to quaternary structure, interacts with PPRC1. Binds DNA as a dimer. This dimer is stabilized by magnesium ions. Interacts, through the bZIP domain, with the coactivators CRTC1/TORC1, CRTC2/TORC2 and CRTC3/TORC3. When phosphorylated on Ser-119, binds CREBBP. Interacts with CREBL2; regulates CREB1 phosphorylation, stability and transcriptional activity. Interacts (phosphorylated form) with TOX3. Interacts with ARRB1. Binds to HIPK2. Interacts with SGK1. Interacts with TSSK4; this interaction facilitates phosphorylation on Ser-119. Forms a complex with KMT2A and CREBBP. Interacts with TOX4; CREB1 is required for full induction of TOX4-dependent activity and the interaction is increased by cAMP and inhibited by insulin. In terms of assembly, (Microbial infection) Interacts with hepatitis B virus/HBV protein X. (Microbial infection) Interacts with HTLV-1 protein Tax. Post-translationally, stimulated by phosphorylation. Phosphorylation of both Ser-119 and Ser-128 in the SCN regulates the activity of CREB and participates in circadian rhythm generation. Phosphorylation of Ser-119 allows CREBBP binding. In liver, phosphorylation is induced by fasting or glucagon in a circadian fashion. CREBL2 positively regulates phosphorylation at Ser-119 thereby stimulating CREB1 transcriptional activity. Phosphorylated upon calcium influx by CaMK4 and CaMK2 on Ser-119. CaMK4 is much more potent than CaMK2 in activating CREB. Phosphorylated by CaMK2 on Ser-128. Phosphorylation of Ser-128 blocks CREB-mediated transcription even when Ser-119 is phosphorylated. Phosphorylated by CaMK1. Phosphorylation of Ser-257 by HIPK2 in response to genotoxic stress promotes CREB1 activity, facilitating the recruitment of the coactivator CBP. Phosphorylated at Ser-119 by RPS6KA3, RPS6KA4 and RPS6KA5 in response to mitogenic or stress stimuli. Phosphorylated by TSSK4 on Ser-119. Sumoylated with SUMO1. Sumoylation on Lys-290, but not on Lys-271, is required for nuclear localization of this protein. Sumoylation is enhanced under hypoxia, promoting nuclear localization and stabilization.

It localises to the nucleus. Its function is as follows. Phosphorylation-dependent transcription factor that stimulates transcription upon binding to the DNA cAMP response element (CRE), a sequence present in many viral and cellular promoters. Transcription activation is enhanced by the TORC coactivators which act independently of Ser-119 phosphorylation. Involved in different cellular processes including the synchronization of circadian rhythmicity and the differentiation of adipose cells. Regulates the expression of apoptotic and inflammatory response factors in cardiomyocytes in response to ERFE-mediated activation of AKT signaling. The polypeptide is Cyclic AMP-responsive element-binding protein 1 (CREB1) (Homo sapiens (Human)).